The sequence spans 367 residues: Eukaryotic translation initiation factor 3 subunit H (367 aa).

The MPN domain maps to 14 to 166 (VQVEALVVMK…LRAFRLSPNF (153 aa)).

The protein belongs to the eIF-3 subunit H family. In terms of assembly, component of the eukaryotic translation initiation factor 3 (eIF-3) complex.

It is found in the cytoplasm. Functionally, component of the eukaryotic translation initiation factor 3 (eIF-3) complex, which is involved in protein synthesis of a specialized repertoire of mRNAs and, together with other initiation factors, stimulates binding of mRNA and methionyl-tRNAi to the 40S ribosome. The eIF-3 complex specifically targets and initiates translation of a subset of mRNAs involved in cell proliferation. The protein is Eukaryotic translation initiation factor 3 subunit H of Sclerotinia sclerotiorum (strain ATCC 18683 / 1980 / Ss-1) (White mold).